A 491-amino-acid polypeptide reads, in one-letter code: Acetylcholine receptor subunit epsilon (491 aa).

The N-terminal stretch at 1 to 20 (MAGALLCALLLLQLLGRGEG) is a signal peptide. Over 21-239 (KNEELRLYHY…VIYSLIIRRK (219 aa)) the chain is Extracellular. Residues asparagine 86 and asparagine 161 are each glycosylated (N-linked (GlcNAc...) asparagine). Cysteine 148 and cysteine 162 are joined by a disulfide. Residues 240–264 (PLFYVINIIVPCVLISGLVLLAYFL) form a helical membrane-spanning segment. Residues 265–272 (PAQAGGQK) are Cytoplasmic-facing. The helical transmembrane segment at 273 to 291 (CTVSINVLLAQTVFLFLIA) threads the bilayer. Over 292 to 306 (QKTPETSLSVPLLGR) the chain is Extracellular. A helical transmembrane segment spans residues 307-328 (YLIFVMVVATLIVMNCVIVLNV). Residues 329-456 (SLRTPTTHAM…WVRMGKALDS (128 aa)) lie on the Cytoplasmic side of the membrane. Residues 457 to 480 (ICFWAALVLFLVGSSLIFLGAYFN) traverse the membrane as a helical segment. The Extracellular portion of the chain corresponds to 481-491 (RVPQLPYPPCM).

Belongs to the ligand-gated ion channel (TC 1.A.9) family. Acetylcholine receptor (TC 1.A.9.1) subfamily. Epsilon/CHRNE sub-subfamily.

It is found in the postsynaptic cell membrane. It localises to the cell membrane. It catalyses the reaction K(+)(in) = K(+)(out). It carries out the reaction Na(+)(in) = Na(+)(out). Functionally, after binding acetylcholine, the AChR responds by an extensive change in conformation that affects all subunits and leads to opening of an ion-conducting channel across the plasma membrane. This is Acetylcholine receptor subunit epsilon (CHRNE) from Bos taurus (Bovine).